Reading from the N-terminus, the 157-residue chain is S-ribosylhomocysteine lyase (157 aa).

3 residues coordinate Fe cation: histidine 54, histidine 58, and cysteine 124.

It belongs to the LuxS family. Homodimer. The cofactor is Fe cation.

The enzyme catalyses S-(5-deoxy-D-ribos-5-yl)-L-homocysteine = (S)-4,5-dihydroxypentane-2,3-dione + L-homocysteine. In terms of biological role, involved in the synthesis of autoinducer 2 (AI-2) which is secreted by bacteria and is used to communicate both the cell density and the metabolic potential of the environment. The regulation of gene expression in response to changes in cell density is called quorum sensing. Catalyzes the transformation of S-ribosylhomocysteine (RHC) to homocysteine (HC) and 4,5-dihydroxy-2,3-pentadione (DPD). The chain is S-ribosylhomocysteine lyase from Levilactobacillus brevis (strain ATCC 367 / BCRC 12310 / CIP 105137 / JCM 1170 / LMG 11437 / NCIMB 947 / NCTC 947) (Lactobacillus brevis).